Here is a 245-residue protein sequence, read N- to C-terminus: Vacuolar iron transporter (245 aa).

Residues 1 to 28 lie on the Cytoplasmic side of the membrane; the sequence is MGEVGESEKYLLNRHKEHHFTAGETVRD. The helical transmembrane segment at 29-49 threads the bilayer; the sequence is IIIGFSDGLTVPFALAAGLSG. At 50–55 the chain is on the vacuolar side; sequence ANASSS. The helical transmembrane segment at 56–76 threads the bilayer; it reads IILTAGIAEVAAGAISMGLGG. Topologically, residues 77–162 are cytoplasmic; sequence YLAAKSEADH…PRRALQSALT (86 aa). Fe cation-binding residues include Glu-94, Glu-97, Glu-105, Glu-108, Met-141, and Glu-145. A helical membrane pass occupies residues 163 to 183; sequence IAISYVLSGLIPLLPYMFIPI. The Vacuolar portion of the chain corresponds to 184–186; sequence AQK. A helical transmembrane segment spans residues 187-207; that stretch reads AVVSSVIVTIFALLIFGFAKG. The Cytoplasmic segment spans residues 208–214; it reads YFTGNKP. The chain crosses the membrane as a helical span at residues 215–235; the sequence is VWSALQTALIGAIASAAAFGM. Over 236–245 the chain is Vacuolar; the sequence is AKGCASSVFE.

This sequence belongs to the CCC1 family. Expressed in petal tissues, but not in other parts of the plant, such as leaves, roots, sepals and stems.

It is found in the vacuole membrane. The catalysed reaction is Fe(2+)(in) = Fe(2+)(out). Functionally, vacuolar iron transporter involved in the transfer of iron ions from the cytosol to the vacuole for intracellular iron storage. Plays an essential role in the development of blue coloration in cornflower petals. The protein is Vacuolar iron transporter of Centaurea cyanus (Garden cornflower).